Consider the following 154-residue polypeptide: Large ribosomal subunit protein uL23z (154 aa).

Belongs to the universal ribosomal protein uL23 family.

In terms of biological role, binds to a specific region on the 26S rRNA. The protein is Large ribosomal subunit protein uL23z (RPL23AA) of Arabidopsis thaliana (Mouse-ear cress).